A 107-amino-acid chain; its full sequence is Large ribosomal subunit protein P2-A (107 aa).

A disordered region spans residues 85-107; the sequence is GAAAPAAAAEEEEDDDMGFGLFD.

This sequence belongs to the eukaryotic ribosomal protein P1/P2 family. P1 and P2 exist as dimers at the large ribosomal subunit. In terms of processing, phosphorylated.

Its function is as follows. Plays an important role in the elongation step of protein synthesis. The chain is Large ribosomal subunit protein P2-A from Trypanosoma cruzi.